Consider the following 209-residue polypeptide: Uridine kinase (209 aa).

Position 12 to 19 (12 to 19 (GGSGSGKT)) interacts with ATP.

The protein belongs to the uridine kinase family.

The protein resides in the cytoplasm. It carries out the reaction uridine + ATP = UMP + ADP + H(+). The enzyme catalyses cytidine + ATP = CMP + ADP + H(+). Its pathway is pyrimidine metabolism; CTP biosynthesis via salvage pathway; CTP from cytidine: step 1/3. It functions in the pathway pyrimidine metabolism; UMP biosynthesis via salvage pathway; UMP from uridine: step 1/1. This Streptococcus mutans serotype c (strain ATCC 700610 / UA159) protein is Uridine kinase.